We begin with the raw amino-acid sequence, 1061 residues long: E3 SUMO-protein ligase ZNF451 (1061 aa).

A disordered region spans residues 1–38; sequence MGDPGSEIIESVPPAGPEASESTTDENEDDIQFVSEGP. A sufficient for E3 SUMO-protein ligase activity region spans residues 1 to 246; it reads MGDPGSEIIE…TDDGHNNNLL (246 aa). Residues 1 to 344 form an important for interaction with SUMO1 and SUMO2 region; it reads MGDPGSEIIE…RVHCRNAGPV (344 aa). The tract at residues 30–37 is interaction with SUMO2 1; the sequence is DIQFVSEG. A PLRP motif is present at residues 38–41; it reads PLRP. The segment at 42-50 is interaction with SUMO2 2; that stretch reads VLEYIDLVS. Glycyl lysine isopeptide (Lys-Gly) (interchain with G-Cter in SUMO2) cross-links involve residues lysine 75, lysine 77, lysine 106, isoleucine 121, alanine 130, leucine 138, lysine 139, lysine 144, and lysine 153. Position 155 is a phosphoserine (serine 155). Position 158 is an omega-N-methylarginine (arginine 158). Glycyl lysine isopeptide (Lys-Gly) (interchain with G-Cter in SUMO2) cross-links involve residues valine 164 and lysine 167. The segment at 168 to 525 is important for interaction with SMAD4; the sequence is PILCPIMHCN…HMSRIHGGAH (358 aa). Residues 169 to 195 form a C2H2-type 1 zinc finger; the sequence is ILCPIMHCNKEFDNGHLLLGHLKRFDH. Glycyl lysine isopeptide (Lys-Gly) (interchain with G-Cter in SUMO2) cross-links involve residues glutamine 226, glycine 240, proline 247, serine 263, lysine 270, lysine 275, lysine 283, aspartate 286, lysine 288, proline 293, lysine 301, and lysine 309. Residues 253–277 form a C2H2-type 2 zinc finger; that stretch reads FACPNCFLLFSRKEECSKHMSGKNH. The segment at 315-337 adopts a C2H2-type 3 zinc-finger fold; it reads VKCVACHKTLRSHMELTAHFRVH. Residue lysine 357 forms a Glycyl lysine isopeptide (Lys-Gly) (interchain with G-Cter in SUMO2) linkage. The C2H2-type 4 zinc-finger motif lies at 362 to 386; it reads GYCPDCNQVFVDETSTQNHKQNSGH. Lysine 423 participates in a covalent cross-link: Glycyl lysine isopeptide (Lys-Gly) (interchain with G-Cter in SUMO2). Phosphoserine is present on serine 432. Glycyl lysine isopeptide (Lys-Gly) (interchain with G-Cter in SUMO2) cross-links involve residues lysine 434, lysine 446, lysine 452, lysine 454, lysine 464, phenylalanine 473, valine 490, cysteine 500, lysine 505, aspartate 508, glycine 522, tryptophan 532, lysine 543, and lysine 585. The segment at 498–521 adopts a C2H2-type 5 zinc-finger fold; it reads YKCVVCGKVCDDSGVIRLHMSRIH. A C2H2-type 6 zinc finger spans residues 531–554; the sequence is FWCRTCKKELTRKDTIMAHVTEFH. The C2H2-type 7; atypical zinc finger occupies 606–631; sequence WQCRICEDMFDSQEYVKQHCMSLASH. Glycyl lysine isopeptide (Lys-Gly) (interchain with G-Cter in SUMO2) cross-links involve residues lysine 632, lysine 647, and lysine 664. Residues 636-659 form a C2H2-type 8 zinc finger; sequence YSCAHCRKPFHKIETLYRHCQDEH. The segment at 667–690 adopts a C2H2-type 9 zinc-finger fold; sequence YFCGLCDLIFNVEEAFLSHYEEHH. Lysine 706 is covalently cross-linked (Glycyl lysine isopeptide (Lys-Gly) (interchain with G-Cter in SUMO1); alternate). Lysine 706 is covalently cross-linked (Glycyl lysine isopeptide (Lys-Gly) (interchain with G-Cter in SUMO2); alternate). Glycyl lysine isopeptide (Lys-Gly) (interchain with G-Cter in SUMO2) cross-links involve residues lysine 731 and lysine 748. A C2H2-type 10 zinc finger spans residues 753–776; sequence FRCSLCSATAQNLTDMNTHIHQVH. Glycyl lysine isopeptide (Lys-Gly) (interchain with G-Cter in SUMO2) cross-links involve residues lysine 777, lysine 779, lysine 790, lysine 817, lysine 827, lysine 832, lysine 843, lysine 845, lysine 852, lysine 951, lysine 992, and lysine 993. The C2H2-type 11 zinc-finger motif lies at 789-812; it reads IKCGTCTKAFHDPESAQQHFHRKH. An important for ubiquitin binding region spans residues 1050 to 1061; sequence LEEAIRRSLEEM.

The protein belongs to the krueppel C2H2-type zinc-finger protein family. As to quaternary structure, homooligomer. Interacts (via N-terminal region) with SUMO1. Interacts (via N-terminal region) with SUMO2. Interacts simultaneously with two SUMO2 chains. Identified in a complex with SUMO2 and UBE2I/UBC9, where one ZNF451 interacts with one UBE2I/UBC9 and two SUMO2 chains, one bound to the UBE2I/UBC9 active site and the other to another region of the same UBE2I/UBC9 molecule. Interacts (via C-terminus) with ubiquitin. Interacts (via N-terminal zinc-finger domains) with SMAD4 (via MH2 domain). Interacts with SMAD2 and SMAD3. Identified in a complex that contains at least ZNF451, SMAD2, SMAD3 and SMAD4. Interacts with EP300. Inhibits interaction between EP300 and the SMAD4 complex. Interacts with SIMC1. Sumoylated. Predominantly sumoylated on the N-terminal region that is important for interaction with SUMO1 and SUMO2. Sumoylation is important for localization in nuclear granules; desumoylation leads to diffuse nucleoplasmic location. Autosumoylated (in vitro). Sumoylation enhances E3 SUMO-protein ligase activity.

It localises to the nucleus. The protein resides in the PML body. Its subcellular location is the nucleoplasm. It functions in the pathway protein modification; protein sumoylation. E3 SUMO-protein ligase; has a preference for SUMO2 and SUMO3 and facilitates UBE2I/UBC9-mediated sumoylation of target proteins. Plays a role in protein SUMO2 modification in response to stress caused by DNA damage and by proteasome inhibitors (in vitro). Required for MCM4 sumoylation. Has no activity with SUMO1. Preferentially transfers an additional SUMO2 chain onto the SUMO2 consensus site 'Lys-11'. Negatively regulates transcriptional activation mediated by the SMAD4 complex in response to TGF-beta signaling. Inhibits EP300-mediated acetylation of histone H3 at 'Lys-9'. Plays a role in regulating the transcription of AR targets. The sequence is that of E3 SUMO-protein ligase ZNF451 (ZNF451) from Homo sapiens (Human).